Here is a 256-residue protein sequence, read N- to C-terminus: Hydroxyacylglutathione hydrolase (256 aa).

Zn(2+) contacts are provided by His-57, His-59, Asp-61, His-62, His-115, Asp-134, and His-172.

The protein belongs to the metallo-beta-lactamase superfamily. Glyoxalase II family. In terms of assembly, monomer. Requires Zn(2+) as cofactor.

The enzyme catalyses an S-(2-hydroxyacyl)glutathione + H2O = a 2-hydroxy carboxylate + glutathione + H(+). Its pathway is secondary metabolite metabolism; methylglyoxal degradation; (R)-lactate from methylglyoxal: step 2/2. Its function is as follows. Thiolesterase that catalyzes the hydrolysis of S-D-lactoyl-glutathione to form glutathione and D-lactic acid. The chain is Hydroxyacylglutathione hydrolase from Rhizobium johnstonii (strain DSM 114642 / LMG 32736 / 3841) (Rhizobium leguminosarum bv. viciae).